The following is a 546-amino-acid chain: Probable Dol-P-Man:Man(7)GlcNAc(2)-PP-Dol alpha-1,6-mannosyltransferase (546 aa).

9 helical membrane passes run 5-25 (ESICWYLANILLVTCIGYYSY), 67-87 (FIPSLFIAVLSYIPSWFVNPL), 113-133 (FGTLSGALFILFSCAQFHLVY), 166-186 (ILVFAAAIVRSEIALLLMCLI), 200-220 (LLLVGISSSLAAVGASFLIDS), 258-278 (LPWLFLNPTTLLFLLISFVYI), 283-303 (LLIYVPLFFIFVYSFLGHKEW), 305-325 (FIIYSIPWFNAASAIGASLCF), and 340-360 (LMFFSGIIFGFIGSSFLLYVF).

Belongs to the glycosyltransferase 22 family.

It localises to the endoplasmic reticulum membrane. The enzyme catalyses an alpha-D-Man-(1-&gt;2)-alpha-D-Man-(1-&gt;2)-alpha-D-Man-(1-&gt;3)-[alpha-D-Man-(1-&gt;2)-alpha-D-Man-(1-&gt;3)-alpha-D-Man-(1-&gt;6)]-beta-D-Man-(1-&gt;4)-beta-D-GlcNAc-(1-&gt;4)-alpha-D-GlcNAc-diphospho-di-trans,poly-cis-dolichol + a di-trans,poly-cis-dolichyl beta-D-mannosyl phosphate = an alpha-D-Man-(1-&gt;2)-alpha-D-Man-(1-&gt;2)-alpha-D-Man-(1-&gt;3)-[alpha-D-Man-(1-&gt;2)-alpha-D-Man-(1-&gt;3)-[alpha-D-Man-(1-&gt;6)]-alpha-D-Man-(1-&gt;6)]-beta-D-Man-(1-&gt;4)-beta-D-GlcNAc-(1-&gt;4)-alpha-D-GlcNAc-diphospho-di-trans,poly-cis-dolichol + a di-trans,poly-cis-dolichyl phosphate + H(+). The protein operates within protein modification; protein glycosylation. In terms of biological role, mannosyltransferase that operates in the biosynthetic pathway of dolichol-linked oligosaccharides, the glycan precursors employed in protein asparagine (N)-glycosylation. The assembly of dolichol-linked oligosaccharides begins on the cytosolic side of the endoplasmic reticulum membrane and finishes in its lumen. The sequential addition of sugars to dolichol pyrophosphate produces dolichol-linked oligosaccharides containing fourteen sugars, including two GlcNAcs, nine mannoses and three glucoses. Once assembled, the oligosaccharide is transferred from the lipid to nascent proteins by oligosaccharyltransferases. In the lumen of the endoplasmic reticulum, adds the eighth mannose residue in an alpha-1,6 linkage onto Man(7)GlcNAc(2)-PP-dolichol to produce Man(8)GlcNAc(2)-PP-dolichol. The polypeptide is Probable Dol-P-Man:Man(7)GlcNAc(2)-PP-Dol alpha-1,6-mannosyltransferase (alg12) (Schizosaccharomyces pombe (strain 972 / ATCC 24843) (Fission yeast)).